The following is a 93-amino-acid chain: Cobalt transport protein CbiN (93 aa).

2 consecutive transmembrane segments (helical) span residues 5–25 (LILLAMVAALMILPFFINHGG) and 63–83 (LLFTLQGSLGAAVIFYILGYA).

This sequence belongs to the CbiN family. As to quaternary structure, forms an energy-coupling factor (ECF) transporter complex composed of an ATP-binding protein (A component, CbiO), a transmembrane protein (T component, CbiQ) and 2 possible substrate-capture proteins (S components, CbiM and CbiN) of unknown stoichimetry.

Its subcellular location is the cell inner membrane. It functions in the pathway cofactor biosynthesis; adenosylcobalamin biosynthesis. Part of the energy-coupling factor (ECF) transporter complex CbiMNOQ involved in cobalt import. The protein is Cobalt transport protein CbiN of Klebsiella pneumoniae subsp. pneumoniae (strain ATCC 700721 / MGH 78578).